We begin with the raw amino-acid sequence, 134 residues long: Ribosome-binding factor A (134 aa).

This sequence belongs to the RbfA family. In terms of assembly, monomer. Binds 30S ribosomal subunits, but not 50S ribosomal subunits or 70S ribosomes.

It is found in the cytoplasm. Functionally, one of several proteins that assist in the late maturation steps of the functional core of the 30S ribosomal subunit. Associates with free 30S ribosomal subunits (but not with 30S subunits that are part of 70S ribosomes or polysomes). Required for efficient processing of 16S rRNA. May interact with the 5'-terminal helix region of 16S rRNA. The polypeptide is Ribosome-binding factor A (Psychrobacter cryohalolentis (strain ATCC BAA-1226 / DSM 17306 / VKM B-2378 / K5)).